Here is a 118-residue protein sequence, read N- to C-terminus: Vitelline membrane protein Vm32E (118 aa).

An N-terminal signal peptide occupies residues 1-17 (MKIVALTLVAFVALAGA). The VM domain occupies 36-75 (GYPAPPCPTNYLFSCQPNLAPAPCAQEAQAPAYGSAGAYT).

This sequence belongs to the vitelline membrane family.

Its subcellular location is the secreted. Functionally, major early eggshell protein. This Drosophila mauritiana (Fruit fly) protein is Vitelline membrane protein Vm32E.